The chain runs to 428 residues: MNIWKTLLLGMLVTGSAVSAPVELDKVAVIVNDGVILQSDIDTATKTLRANAKKSGQALPDADVLNEQIVDKLIIDTLQTQEADRIGVRIDDTRLNQAIEEIARNNNQTIDELSAAIASEGVSYEEFREQIRKEMAASEARNALVRRRINILPAEVDNLAELLSKETNASVEYRIGHIQLRFTDGQDKSALEAQAKELVEKLKQGADFSTMAYTYSKGPKALQGGDWGWMRKEEMPTIFADQIKMQNKGSIIGPFRSGVGFHILKIEDVKGLETVAVTEVNARHILLKPTVILSDEGAQRELNEFIRRIRAGEATFGELAQQYSQDPGSAAQDGELGYQTPDLYVPEFKHQVETLPVGTISEPFKTVHGWHIVEVLDRREVDRTDSAMKNKAYRILFNRKFNEEVGAWMQELRAGAFVEIINEEENDG.

The first 19 residues, 1–19 (MNIWKTLLLGMLVTGSAVS), serve as a signal peptide directing secretion. PpiC domains lie at 170–268 (SVEY…KIED) and 277–377 (VTEV…EVLD).

It localises to the periplasm. It carries out the reaction [protein]-peptidylproline (omega=180) = [protein]-peptidylproline (omega=0). Chaperone involved in the correct folding and assembly of outer membrane proteins. Recognizes specific patterns of aromatic residues and the orientation of their side chains, which are found more frequently in integral outer membrane proteins. May act in both early periplasmic and late outer membrane-associated steps of protein maturation. This chain is Chaperone SurA, found in Vibrio vulnificus (strain YJ016).